We begin with the raw amino-acid sequence, 190 residues long: Putative manganese efflux pump MntP (190 aa).

Transmembrane regions (helical) follow at residues 5–25 (ALLALAVALAMDALAVAVATG), 41–61 (WHFGLFQAAMPIAGWFMGQGI), 64–84 (FVDAWAHWIAFGLLAFIGLKM), 105–125 (TSLIMLSVATSIDALAVGVTL), 127–147 (MLGLSIWMPAAVIGLVCLGLT), and 169–189 (ILGGAVLLGIGFKILHESGVF).

Belongs to the MntP (TC 9.B.29) family.

Its subcellular location is the cell inner membrane. Its function is as follows. Probably functions as a manganese efflux pump. This is Putative manganese efflux pump MntP from Oleidesulfovibrio alaskensis (strain ATCC BAA-1058 / DSM 17464 / G20) (Desulfovibrio alaskensis).